A 311-amino-acid polypeptide reads, in one-letter code: MIDCAIIGGGPAGLSAGLYATRGGVKNAVLFEKGMPGGQITGSSEIENYPGVKEVVSGLDFMQPWQEQCFRFGLKHEMTAIQRVSKKGSHFVILAEDGKTFEAKSVIIATGGSPKRTGIKGESEYWGKGVSTCATCDGFFYKNKEVAVLGGGDTAVEEAIYLANICKKVYLIHRRDGFRCAPITLEHAKNNSKIEFLTPYVVEEIKGDASGVSSLSIKNTATNEKRELVVPGLFIFVGYDVNNAVLKQEDNSMLCECDEYGSIVVDFSMKTNVQGLFAAGDIRIFAPKQVVCAASDGATAALSVISYLEHH.

FAD-binding positions include 31 to 39 and 32 to 39; these read FEKGMPGGQ and EKGMPGGQ. A disulfide bond links Cys133 and Cys136. Residue 281-290 coordinates FAD; sequence DIRIFAPKQV.

Belongs to the class-II pyridine nucleotide-disulfide oxidoreductase family. As to quaternary structure, homodimer. FAD serves as cofactor.

The protein resides in the cytoplasm. The enzyme catalyses [thioredoxin]-dithiol + NADP(+) = [thioredoxin]-disulfide + NADPH + H(+). The chain is Thioredoxin reductase (trxB) from Helicobacter pylori (strain J99 / ATCC 700824) (Campylobacter pylori J99).